A 262-amino-acid chain; its full sequence is (5R,7aS)-5-hydroxy-7a-methyl-1-oxo-2,3,5,6,7,7a-hexahydro-1H-indene-carboxyl-CoA reductase (262 aa).

Positions 50, 77, 78, 104, 170, 174, and 203 each coordinate NAD(+). Residue Tyr170 is the Proton acceptor of the active site.

This sequence belongs to the short-chain dehydrogenases/reductases (SDR) family.

The catalysed reaction is (5R,7aS)-5-hydroxy-7a-methyl-1-oxo-2,3,5,6,7,7a-hexahydro-1H-indene-carboxyl-CoA + NAD(+) = (7aS)-7a-methyl-1,5-dioxo-2,3,5,6,7,7a-hexahydro-1H-indene-carboxyl-CoA + NADH + H(+). The protein operates within steroid metabolism; cholesterol degradation. With respect to regulation, requires the presence of IpdC. Functionally, involved in the final steps of cholesterol and steroid degradation. Probably catalyzes the oxidation of the 5-OH group of (5R,7aS)-5-hydroxy-7a-methyl-1-oxo-2,3,5,6,7,7a-hexahydro-1H-indene-carboxyl-CoA, leading to the formation of HIEC-CoA. The protein is (5R,7aS)-5-hydroxy-7a-methyl-1-oxo-2,3,5,6,7,7a-hexahydro-1H-indene-carboxyl-CoA reductase of Mycobacterium tuberculosis (strain ATCC 25618 / H37Rv).